The following is a 357-amino-acid chain: DNA primase small subunit PriS (357 aa).

Residues D105, D107, and D259 contribute to the active site.

It belongs to the eukaryotic-type primase small subunit family. Heterodimer of a small subunit (PriS) and a large subunit (PriL). Mg(2+) is required as a cofactor. Mn(2+) serves as cofactor.

In terms of biological role, catalytic subunit of DNA primase, an RNA polymerase that catalyzes the synthesis of short RNA molecules used as primers for DNA polymerase during DNA replication. The small subunit contains the primase catalytic core and has DNA synthesis activity on its own. Binding to the large subunit stabilizes and modulates the activity, increasing the rate of DNA synthesis while decreasing the length of the DNA fragments, and conferring RNA synthesis capability. The DNA polymerase activity may enable DNA primase to also catalyze primer extension after primer synthesis. May also play a role in DNA repair. The protein is DNA primase small subunit PriS of Methanococcus maripaludis (strain DSM 14266 / JCM 13030 / NBRC 101832 / S2 / LL).